A 696-amino-acid chain; its full sequence is Polyribonucleotide nucleotidyltransferase (696 aa).

Mg(2+) contacts are provided by Asp-483 and Asp-489. Residues 550-609 (PRITTIYVKTDKIRDVIGSGGKNIRGITEATGVTIDIDDTGKINIASTDKAACDLAIKMI) enclose the KH domain. One can recognise an S1 motif domain in the interval 619 to 687 (GKLYMGLVKK…KQGKIKLSRK (69 aa)).

It belongs to the polyribonucleotide nucleotidyltransferase family. Mg(2+) is required as a cofactor.

The protein resides in the cytoplasm. It catalyses the reaction RNA(n+1) + phosphate = RNA(n) + a ribonucleoside 5'-diphosphate. Involved in mRNA degradation. Catalyzes the phosphorolysis of single-stranded polyribonucleotides processively in the 3'- to 5'-direction. This chain is Polyribonucleotide nucleotidyltransferase, found in Geotalea uraniireducens (strain Rf4) (Geobacter uraniireducens).